A 481-amino-acid chain; its full sequence is Protein nucleotidyltransferase YdiU (481 aa).

The ATP site is built by glycine 85, glycine 87, arginine 88, lysine 108, aspartate 120, glycine 121, arginine 172, and arginine 179. The active-site Proton acceptor is the aspartate 248. Asparagine 249 and aspartate 258 together coordinate Mg(2+). ATP is bound at residue aspartate 258.

The protein belongs to the SELO family. The cofactor is Mg(2+). It depends on Mn(2+) as a cofactor.

The enzyme catalyses L-seryl-[protein] + ATP = 3-O-(5'-adenylyl)-L-seryl-[protein] + diphosphate. It catalyses the reaction L-threonyl-[protein] + ATP = 3-O-(5'-adenylyl)-L-threonyl-[protein] + diphosphate. It carries out the reaction L-tyrosyl-[protein] + ATP = O-(5'-adenylyl)-L-tyrosyl-[protein] + diphosphate. The catalysed reaction is L-histidyl-[protein] + UTP = N(tele)-(5'-uridylyl)-L-histidyl-[protein] + diphosphate. The enzyme catalyses L-seryl-[protein] + UTP = O-(5'-uridylyl)-L-seryl-[protein] + diphosphate. It catalyses the reaction L-tyrosyl-[protein] + UTP = O-(5'-uridylyl)-L-tyrosyl-[protein] + diphosphate. Functionally, nucleotidyltransferase involved in the post-translational modification of proteins. It can catalyze the addition of adenosine monophosphate (AMP) or uridine monophosphate (UMP) to a protein, resulting in modifications known as AMPylation and UMPylation. This chain is Protein nucleotidyltransferase YdiU, found in Cereibacter sphaeroides (strain ATCC 17025 / ATH 2.4.3) (Rhodobacter sphaeroides).